Here is a 533-residue protein sequence, read N- to C-terminus: Protein transport protein SEC9 (533 aa).

4 disordered regions span residues 1–32, 68–184, 200–246, and 259–284; these read MGFK…IATK, RPGA…MNAT, MAQD…KRAP, and PTNE…GQAP. The segment covering 11–24 has biased composition (basic and acidic residues); the sequence is PPEEDTPERNRDLL. Over residues 92–102 the composition is skewed to polar residues; sequence GNTSRVGQPQQ. Positions 157 to 172 are enriched in gly residues; that stretch reads GGPGNPYGGSTAGAGT. The segment covering 227-240 has biased composition (low complexity); it reads RPQAAAETPRPQAA. T-SNARE coiled-coil homology domains lie at 318-380 and 470-532; these read RFTK…VAEL and DEME…LTNI.

Belongs to the SNAP-25 family.

In Eremothecium gossypii (strain ATCC 10895 / CBS 109.51 / FGSC 9923 / NRRL Y-1056) (Yeast), this protein is Protein transport protein SEC9 (SEC9).